A 432-amino-acid polypeptide reads, in one-letter code: Interleukin-11 receptor subunit alpha-1 (432 aa).

The N-terminal stretch at 1–23 (MSSSCSGLTRVLVAVATALVSSS) is a signal peptide. Residues 24-372 (SPCPQAWGPP…DPLEQVAVLA (349 aa)) are Extracellular-facing. The Ig-like C2-type domain maps to 27-110 (PQAWGPPGVQ…SGGMVTLKLG (84 aa)). 3 disulfides stabilise this stretch: cysteine 48–cysteine 94, cysteine 120–cysteine 130, and cysteine 170–cysteine 180. 2 Fibronectin type-III domains span residues 112–219 (PPAR…LRPD) and 220–317 (PPQG…TPST). The N-linked (GlcNAc...) asparagine glycan is linked to asparagine 127. Positions 151–170 (KTLPGAESQRESPSTGPWPC) are disordered. N-linked (GlcNAc...) asparagine glycosylation is present at asparagine 194. The short motif at 304–308 (WSAWS) is the WSXWS motif element. 2 disordered regions span residues 309–332 (PEAW…QGHG) and 342–361 (EDSP…PLDH). The chain crosses the membrane as a helical span at residues 373 to 393 (SLGIFSCLGLAVGALALGLWL). Residues 394-432 (RLRRSGKDGPQKPGLLAPMIPVEKLPGIPNLQRTPENFS) are Cytoplasmic-facing.

The protein belongs to the type I cytokine receptor family. Type 3 subfamily. As to quaternary structure, on IL11 binding, forms a multimer complex with IL6ST/gp130. Post-translationally, a short soluble form is also released from the membrane by proteolysis. The sIL11RA is formed either by limited proteolysis of membrane-bound receptors, a process referred to as ectodomain shedding, or directly secreted from the cells after alternative mRNA splicing. mIL11RA is cleaved by the proteases ADAM10, ELANE and PRTN3. In terms of tissue distribution, widely expressed in all adult tissues and in embryos. Highest levels in kidney, skeletal muscle and embryo.

Its subcellular location is the membrane. It localises to the secreted. Receptor for interleukin-11. The receptor systems for IL6, LIF, OSM, CNTF, IL11 and CT1 can utilize IL6ST for initiating signal transmission. The IL11/IL11RA/IL6ST complex may be involved in the control of proliferation and/or differentiation of skeletogenic progenitor or other mesenchymal cells. Essential for the normal development of craniofacial bones and teeth. In terms of biological role, soluble form of IL11 receptor (sIL11RA) that acts as an agonist of IL11 activity. The IL11:sIL11RA complex binds to IL6ST/gp130 on cell surfaces and induces signaling also on cells that do not express membrane-bound IL11RA in a process called IL11 trans-signaling. The polypeptide is Interleukin-11 receptor subunit alpha-1 (Mus musculus (Mouse)).